Reading from the N-terminus, the 200-residue chain is Pyridoxal 5'-phosphate synthase subunit PdxT (200 aa).

50–52 (GES) serves as a coordination point for L-glutamine. Catalysis depends on Cys82, which acts as the Nucleophile. L-glutamine contacts are provided by residues Arg110 and 138–139 (IR). Catalysis depends on charge relay system residues His174 and Glu176.

The protein belongs to the glutaminase PdxT/SNO family. In the presence of PdxS, forms a dodecamer of heterodimers. Only shows activity in the heterodimer.

The enzyme catalyses aldehydo-D-ribose 5-phosphate + D-glyceraldehyde 3-phosphate + L-glutamine = pyridoxal 5'-phosphate + L-glutamate + phosphate + 3 H2O + H(+). It catalyses the reaction L-glutamine + H2O = L-glutamate + NH4(+). It participates in cofactor biosynthesis; pyridoxal 5'-phosphate biosynthesis. Its function is as follows. Catalyzes the hydrolysis of glutamine to glutamate and ammonia as part of the biosynthesis of pyridoxal 5'-phosphate. The resulting ammonia molecule is channeled to the active site of PdxS. This is Pyridoxal 5'-phosphate synthase subunit PdxT from Oceanobacillus iheyensis (strain DSM 14371 / CIP 107618 / JCM 11309 / KCTC 3954 / HTE831).